Consider the following 134-residue polypeptide: Protein PsiE homolog (134 aa).

The next 4 helical transmembrane spans lie at 14–34 (LQWILNIALIILSIVLSIFLI), 56–76 (VESIIVYFLYFEFIALIIKYF), 82–102 (FPLRYFIYIGITALIRLIIVS), and 106–126 (PMETLLYAGAILVLVIALYIS).

Belongs to the PsiE family.

The protein resides in the cell membrane. This chain is Protein PsiE homolog, found in Bacillus anthracis.